Here is a 323-residue protein sequence, read N- to C-terminus: UDP-N-acetylenolpyruvoylglucosamine reductase (323 aa).

Positions 33 to 214 (IGGPAEALFC…LSAVFTLTHG (182 aa)) constitute an FAD-binding PCMH-type domain. The active-site Proton donor is the S243. The active site involves E315.

The protein belongs to the MurB family. Requires FAD as cofactor.

It is found in the cytoplasm. The catalysed reaction is UDP-N-acetyl-alpha-D-muramate + NADP(+) = UDP-N-acetyl-3-O-(1-carboxyvinyl)-alpha-D-glucosamine + NADPH + H(+). Its pathway is cell wall biogenesis; peptidoglycan biosynthesis. Functionally, cell wall formation. This chain is UDP-N-acetylenolpyruvoylglucosamine reductase, found in Treponema denticola (strain ATCC 35405 / DSM 14222 / CIP 103919 / JCM 8153 / KCTC 15104).